The following is a 175-amino-acid chain: Anterior gradient protein 2 homolog (175 aa).

An N-terminal signal peptide occupies residues 1 to 20 (MEKIPVSAFLLLVALSYTLA). The interval 21 to 40 (RDTTVKPGAKKDTKDSRPKL) is required to promote cell adhesion. 2 consecutive short sequence motifs (homodimer stabilization; interchain) follow at residues 45 to 54 (SRGWGDQLIW) and 60 to 67 (EALYKSKT).

This sequence belongs to the AGR family. As to quaternary structure, monomer and homodimer. Interacts with LYPD3 and DAG1 (alphaDAG1). Interacts with MUC2; disulfide-linked. In terms of tissue distribution, expressed strongly in trachea, lung, stomach, colon, prostate and small intestine. Expressed weakly in pituitary gland, salivary gland, mammary gland, bladder, appendix, ovary, fetal lung, uterus, pancreas, kidney, fetal kidney, testis, placenta, thyroid gland and in estrogen receptor (ER)-positive breast cancer cell lines.

The protein localises to the secreted. The protein resides in the endoplasmic reticulum. In terms of biological role, required for MUC2 post-transcriptional synthesis and secretion. May play a role in the production of mucus by intestinal cells. Proto-oncogene that may play a role in cell migration, cell differentiation and cell growth. Promotes cell adhesion. The polypeptide is Anterior gradient protein 2 homolog (AGR2) (Homo sapiens (Human)).